An 82-amino-acid chain; its full sequence is ATP synthase subunit c (82 aa).

The next 2 helical transmembrane spans lie at 7 to 27 (AASVVAAGLAVGLGAIGPGIG) and 57 to 77 (FAFMESLTIYGLVVALVLLFA).

It belongs to the ATPase C chain family. F-type ATPases have 2 components, F(1) - the catalytic core - and F(0) - the membrane proton channel. F(1) has five subunits: alpha(3), beta(3), gamma(1), delta(1), epsilon(1). F(0) has four main subunits: a(1), b(1), b'(1) and c(10-14). The alpha and beta chains form an alternating ring which encloses part of the gamma chain. F(1) is attached to F(0) by a central stalk formed by the gamma and epsilon chains, while a peripheral stalk is formed by the delta, b and b' chains.

The protein resides in the cellular thylakoid membrane. In terms of biological role, f(1)F(0) ATP synthase produces ATP from ADP in the presence of a proton or sodium gradient. F-type ATPases consist of two structural domains, F(1) containing the extramembraneous catalytic core and F(0) containing the membrane proton channel, linked together by a central stalk and a peripheral stalk. During catalysis, ATP synthesis in the catalytic domain of F(1) is coupled via a rotary mechanism of the central stalk subunits to proton translocation. Functionally, key component of the F(0) channel; it plays a direct role in translocation across the membrane. A homomeric c-ring of between 10-14 subunits forms the central stalk rotor element with the F(1) delta and epsilon subunits. The polypeptide is ATP synthase subunit c (Prochlorococcus marinus (strain NATL1A)).